A 465-amino-acid polypeptide reads, in one-letter code: Lysophospholipid acyltransferase 2 (465 aa).

The next 9 helical transmembrane spans lie at 15–35 (VSVAVLRFLLCFVATIPISFL), 55–75 (FLSYLSFGFSSNLHFLVPMTI), 86–106 (LSGFITFFLGFAYLIGCHVFY), 161–181 (SLIEYFGYCLCCGSHFAGPVF), 214–234 (AVFQAAICMALYLYLVPQFPL), 266–286 (YFIWSISEASIIISGLGFSGW), 356–376 (AVWHGLYPGYIIFFVQSALMI), 399–419 (VLVLINFLYTVVVLNYSSVGF), and 434–454 (VYYIGTVIPIAVLLLSYLVPV). The active site involves His-359.

It belongs to the membrane-bound acyltransferase family. Interacts with GPAT9 and DGAT1. Expressed in rosette leaves, pollen grains, developing embryos and developing seeds.

It localises to the endoplasmic reticulum membrane. The enzyme catalyses a 1-acyl-sn-glycero-3-phosphocholine + an acyl-CoA = a 1,2-diacyl-sn-glycero-3-phosphocholine + CoA. It catalyses the reaction 1-(9Z-octadecenoyl)-sn-glycero-3-phosphocholine + (9Z)-octadecenoyl-CoA = 1,2-di-(9Z-octadecenoyl)-sn-glycero-3-phosphocholine + CoA. The catalysed reaction is 1-(9Z-octadecenoyl)-sn-glycero-3-phosphocholine + (9Z,12Z)-octadecadienoyl-CoA = 1-(9Z)-octadecenoyl-2-(9Z,12Z)-octadecadienoyl-sn-glycero-3-phosphocholine + CoA. It carries out the reaction (9Z,12Z,15Z)-octadecatrienoyl-CoA + 1-(9Z-octadecenoyl)-sn-glycero-3-phosphocholine = 1-(9Z-octadecaenoyl)-2-(9Z,12Z,15Z-octadecatrienoyl)-sn-glycero-3-phosphocholine + CoA. The enzyme catalyses a 1-acyl-sn-glycero-3-phosphoethanolamine + an acyl-CoA = a 1,2-diacyl-sn-glycero-3-phosphoethanolamine + CoA. It catalyses the reaction a 1-acyl-sn-glycero-3-phospho-L-serine + an acyl-CoA = a 1,2-diacyl-sn-glycero-3-phospho-L-serine + CoA. Functionally, lysophospholipid acyltransferase with broad specificity. Mediates the conversion of lysophosphatidylethanolamine (1-acyl-sn-glycero-3-phosphoethanolamine or LPE) into phosphatidylethanolamine (1,2-diacyl-sn-glycero-3-phosphoethanolamine or PE) (LPEAT activity). Catalyzes the acylation of lysophosphatidylserine (1-acyl-2-hydroxy-sn-glycero-3-phospho-L-serine or LPS) into phosphatidylserine (1,2-diacyl-sn-glycero-3-phospho-L-serine or PS) (LPSAT activity). Can convert lysophosphatidylcholine (1-acyl-sn-glycero-3-phosphocholine or LPC) into phosphatidylcholine (1,2-diacyl-sn-glycero-3-phosphocholine or PC) (LPCAT activity). Exhibits preference for C18-unsaturated acyl-CoA when transferring an acyl group to lysophosphatidylcholine. Can also utilize lysophosphatidylglycerol (LPG) as substrate in vitro. Has neither activity towards lysophosphatidic acid (LPA) nor lysophosphatidylinositol (LPI). Lysophospholipid acyltransferases catalyze the reacylation step of the phospholipid remodeling pathway also known as the Lands cycle. The primary function of the Lands cycle is to provide a route for acyl remodeling to modify fatty acid (FA) composition of phospholipids derived from the Kennedy pathway. Is involved in PC acyl editing and phosphocholine headgroup exchange between PC and diacylglycerols. This processes control the majority of acyl fluxes through PC to provide polyunsaturated fatty acids for triacylglycerols synthesis in seeds. Involved with LPCAT1 in the direct incorporation of newly synthesized fatty acids exported form the chloroplast into PC through acyl editing. This Arabidopsis thaliana (Mouse-ear cress) protein is Lysophospholipid acyltransferase 2.